We begin with the raw amino-acid sequence, 150 residues long: Deoxyuridine 5'-triphosphate nucleotidohydrolase (150 aa).

Residues 69–71 (RSG), N82, and 86–88 (TID) each bind substrate.

The protein belongs to the dUTPase family. It depends on Mg(2+) as a cofactor.

The catalysed reaction is dUTP + H2O = dUMP + diphosphate + H(+). Its pathway is pyrimidine metabolism; dUMP biosynthesis; dUMP from dCTP (dUTP route): step 2/2. In terms of biological role, this enzyme is involved in nucleotide metabolism: it produces dUMP, the immediate precursor of thymidine nucleotides and it decreases the intracellular concentration of dUTP so that uracil cannot be incorporated into DNA. The sequence is that of Deoxyuridine 5'-triphosphate nucleotidohydrolase from Syntrophus aciditrophicus (strain SB).